Consider the following 789-residue polypeptide: Mitochondrial inner membrane m-AAA protease component AFG3L1 (789 aa).

The transit peptide at 1 to 70 (MLLRLVGAAG…KLTSFSPRLY (70 aa)) directs the protein to the mitochondrion. Residues 81 to 121 (FKNKKNRKSASPGNSVPPKKEPKNAGPGGDGGNRGGKGDDF) form a disordered region. Gly residues predominate over residues 106 to 115 (GPGGDGGNRG). A run of 2 helical transmembrane segments spans residues 139-158 (FRSLAVLGAGVAAGFLYFYF) and 246-264 (FLRSLVPTLVLVSILLYAM). Residues Val302, Ala303, Thr344, Gly345, Lys346, Thr347, Leu348, and His482 each contribute to the ATP site. His566 contacts Zn(2+). Glu567 is a catalytic residue. The Zn(2+) site is built by His570 and Asp641. The disordered stretch occupies residues 749–789 (EEFVEGTGSLEEDTSLPEGLKDWNKGREEGGTERGLQESPV). A compositionally biased stretch (basic and acidic residues) spans 767–789 (GLKDWNKGREEGGTERGLQESPV).

In the N-terminal section; belongs to the AAA ATPase family. This sequence in the C-terminal section; belongs to the peptidase M41 family. Homooligomer. Forms heterohexamers with Spg7 and Afg3l1. The m-AAA protease is either composed of homohexamers of Afg3l2 or heterohexamers of Afg3l1, Afg3l2 and/or Spg7. It depends on Zn(2+) as a cofactor.

It is found in the mitochondrion inner membrane. It carries out the reaction ATP + H2O = ADP + phosphate + H(+). Catalytic component of the m-AAA protease, a protease that plays a key role in proteostasis of inner mitochondrial membrane proteins, and which is essential for axonal and neuron development. Afg3l1 possesses both ATPase and protease activities: the ATPase activity is required to unfold substrates, threading them into the internal proteolytic cavity for hydrolysis into small peptide fragments. The m-AAA protease exerts a dual role in the mitochondrial inner membrane: it mediates the processing of specific regulatory proteins and ensures protein quality control by degrading misfolded polypeptides. Required for SPG7 maturation into its active mature form after SPG7 cleavage by mitochondrial-processing peptidase (MPP). The chain is Mitochondrial inner membrane m-AAA protease component AFG3L1 from Mus musculus (Mouse).